The primary structure comprises 248 residues: Phosphate import ATP-binding protein PstB (248 aa).

An ABC transporter domain is found at 1–243 (MAVNDVNVFY…PQHNLTQGYI (243 aa)). 33 to 40 (GPSGCGKS) serves as a coordination point for ATP.

Belongs to the ABC transporter superfamily. Phosphate importer (TC 3.A.1.7) family. The complex is composed of two ATP-binding proteins (PstB), two transmembrane proteins (PstC and PstA) and a solute-binding protein (PstS).

The protein resides in the cell inner membrane. It catalyses the reaction phosphate(out) + ATP + H2O = ADP + 2 phosphate(in) + H(+). Part of the ABC transporter complex PstSACB involved in phosphate import. Responsible for energy coupling to the transport system. This chain is Phosphate import ATP-binding protein PstB, found in Rhodospirillum rubrum (strain ATCC 11170 / ATH 1.1.1 / DSM 467 / LMG 4362 / NCIMB 8255 / S1).